We begin with the raw amino-acid sequence, 224 residues long: Protein FMP52, mitochondrial (224 aa).

Belongs to the FMP52 family.

It is found in the mitochondrion outer membrane. The protein is Protein FMP52, mitochondrial (FMP52) of Kluyveromyces lactis (strain ATCC 8585 / CBS 2359 / DSM 70799 / NBRC 1267 / NRRL Y-1140 / WM37) (Yeast).